Consider the following 211-residue polypeptide: Large ribosomal subunit protein uL4 (211 aa).

The tract at residues 40–85 (QQAHSRQGTASTLTRSEVRGGGRKPYKQKGTGRARQGSVRTPLRPG) is disordered. A compositionally biased stretch (polar residues) spans 41 to 54 (QAHSRQGTASTLTR). Over residues 60–71 (GGRKPYKQKGTG) the composition is skewed to basic residues.

This sequence belongs to the universal ribosomal protein uL4 family. Part of the 50S ribosomal subunit.

Its function is as follows. One of the primary rRNA binding proteins, this protein initially binds near the 5'-end of the 23S rRNA. It is important during the early stages of 50S assembly. It makes multiple contacts with different domains of the 23S rRNA in the assembled 50S subunit and ribosome. Forms part of the polypeptide exit tunnel. The sequence is that of Large ribosomal subunit protein uL4 from Synechococcus sp. (strain CC9311).